The primary structure comprises 70 residues: Envelope small membrane protein (70 aa).

Gly2 carries N-myristoyl glycine; by host lipidation. An endoplasmic reticulum retention signal region spans residues 2-15 (GSLWSKISQLFVDA). Over 2-25 (GSLWSKISQLFVDAFTEFLVSVVD) the chain is Virion surface. Residues 26–46 (IAIFLAILFGFTVAGWLLVFL) traverse the membrane as a helical segment. Residues 47–70 (LRVVCSALLRSRSAIHSPELSKVL) lie on the Intravirion side of the membrane.

Belongs to the arteriviridae E protein family. Homooligomer. Associates with itself into higher-order structures, including dimers, trimers and tetramers. Associates with the GP2a-GP3-GP4 complex. In terms of processing, myristoylated. Post-translationally, not glycosylated.

It localises to the virion membrane. The protein localises to the host endoplasmic reticulum membrane. It is found in the host Golgi apparatus membrane. Its subcellular location is the secreted. In terms of biological role, minor envelope protein. May function as a viroporin in the virion envelope that facilitates uncoating of the virus in order to release the genomic RNA into the cytoplasm for subsequent replication. This is Envelope small membrane protein (GP2b) from Sus scrofa (Pig).